The following is a 187-amino-acid chain: Transcriptional activator of sulfur metabolism MET28 (187 aa).

The bZIP domain maps to 105 to 168 (DKIKQERRRK…EFWKAKLNDI (64 aa)). Residues 106–136 (KIKQERRRKNTEASQRFRIRKKQKNFENMNK) form a basic motif region. The segment at 137-151 (LQNLNTQINKLRDRI) is leucine-zipper.

It belongs to the bZIP family. Interacts with MET4 to form a heteromeric complex which also includes CBF1. Forms two alternate complexes associating MET28 with MET4 and either MET31 or MET32. Binds to DNA through the MET4-MET28-CBF1 complex.

It is found in the cytoplasm. It localises to the nucleus. Its function is as follows. Acts as an accessory factor in the activation of sulfur amino acids metabolism genes. Possesses no intrinsic transcription activation abilities. Binds to the MET16 promoter as a complex with MET4 and CBF1. Enhances the DNA-binding activity of CBF1. This is Transcriptional activator of sulfur metabolism MET28 (MET28) from Saccharomyces cerevisiae (strain ATCC 204508 / S288c) (Baker's yeast).